Consider the following 256-residue polypeptide: Alcohol dehydrogenase (256 aa).

An NAD(+)-binding site is contributed by 12-35 (FVAGLGGIGLDTSKELVKRDLKNL). A substrate-binding site is contributed by serine 140. The Proton acceptor role is filled by tyrosine 153.

The protein belongs to the short-chain dehydrogenases/reductases (SDR) family. Homodimer.

It carries out the reaction a primary alcohol + NAD(+) = an aldehyde + NADH + H(+). It catalyses the reaction a secondary alcohol + NAD(+) = a ketone + NADH + H(+). The sequence is that of Alcohol dehydrogenase (Adh) from Drosophila yakuba (Fruit fly).